Here is a 181-residue protein sequence, read N- to C-terminus: ATP synthase subunit delta (181 aa).

It belongs to the ATPase delta chain family. As to quaternary structure, F-type ATPases have 2 components, F(1) - the catalytic core - and F(0) - the membrane proton channel. F(1) has five subunits: alpha(3), beta(3), gamma(1), delta(1), epsilon(1). F(0) has three main subunits: a(1), b(2) and c(10-14). The alpha and beta chains form an alternating ring which encloses part of the gamma chain. F(1) is attached to F(0) by a central stalk formed by the gamma and epsilon chains, while a peripheral stalk is formed by the delta and b chains.

It is found in the cell inner membrane. Functionally, f(1)F(0) ATP synthase produces ATP from ADP in the presence of a proton or sodium gradient. F-type ATPases consist of two structural domains, F(1) containing the extramembraneous catalytic core and F(0) containing the membrane proton channel, linked together by a central stalk and a peripheral stalk. During catalysis, ATP synthesis in the catalytic domain of F(1) is coupled via a rotary mechanism of the central stalk subunits to proton translocation. This protein is part of the stalk that links CF(0) to CF(1). It either transmits conformational changes from CF(0) to CF(1) or is implicated in proton conduction. This Protochlamydia amoebophila (strain UWE25) protein is ATP synthase subunit delta.